Here is a 380-residue protein sequence, read N- to C-terminus: Cytochrome b (380 aa).

The next 4 helical transmembrane spans lie at phenylalanine 34–threonine 54, tryptophan 78–isoleucine 99, tryptophan 114–leucine 134, and phenylalanine 179–threonine 199. Positions 84 and 98 each coordinate heme b. Heme b contacts are provided by histidine 183 and histidine 197. Residue histidine 202 participates in a ubiquinone binding. The next 4 helical transmembrane spans lie at proline 227–serine 247, leucine 289–histidine 309, leucine 321–serine 341, and phenylalanine 348–proline 368.

This sequence belongs to the cytochrome b family. As to quaternary structure, the cytochrome bc1 complex contains 11 subunits: 3 respiratory subunits (MT-CYB, CYC1 and UQCRFS1), 2 core proteins (UQCRC1 and UQCRC2) and 6 low-molecular weight proteins (UQCRH/QCR6, UQCRB/QCR7, UQCRQ/QCR8, UQCR10/QCR9, UQCR11/QCR10 and a cleavage product of UQCRFS1). This cytochrome bc1 complex then forms a dimer. Heme b serves as cofactor.

It localises to the mitochondrion inner membrane. Component of the ubiquinol-cytochrome c reductase complex (complex III or cytochrome b-c1 complex) that is part of the mitochondrial respiratory chain. The b-c1 complex mediates electron transfer from ubiquinol to cytochrome c. Contributes to the generation of a proton gradient across the mitochondrial membrane that is then used for ATP synthesis. The polypeptide is Cytochrome b (MT-CYB) (Todus todus (Jamaican tody)).